A 215-amino-acid polypeptide reads, in one-letter code: Probable transaldolase (215 aa).

K84 (schiff-base intermediate with substrate) is an active-site residue.

Belongs to the transaldolase family. Type 3B subfamily.

The protein localises to the cytoplasm. The catalysed reaction is D-sedoheptulose 7-phosphate + D-glyceraldehyde 3-phosphate = D-erythrose 4-phosphate + beta-D-fructose 6-phosphate. It functions in the pathway carbohydrate degradation; pentose phosphate pathway; D-glyceraldehyde 3-phosphate and beta-D-fructose 6-phosphate from D-ribose 5-phosphate and D-xylulose 5-phosphate (non-oxidative stage): step 2/3. Functionally, transaldolase is important for the balance of metabolites in the pentose-phosphate pathway. This is Probable transaldolase from Exiguobacterium sibiricum (strain DSM 17290 / CCUG 55495 / CIP 109462 / JCM 13490 / 255-15).